A 282-amino-acid polypeptide reads, in one-letter code: NH(3)-dependent NAD(+) synthetase (282 aa).

51–58 (GISGGVDS) contacts ATP. Residue D57 coordinates Mg(2+). R148 contributes to the deamido-NAD(+) binding site. T168 lines the ATP pocket. Residue E173 coordinates Mg(2+). Deamido-NAD(+)-binding residues include K181 and D188. Residues K197 and T219 each contribute to the ATP site. Residue 268-269 (HK) coordinates deamido-NAD(+).

The protein belongs to the NAD synthetase family. In terms of assembly, homodimer.

The catalysed reaction is deamido-NAD(+) + NH4(+) + ATP = AMP + diphosphate + NAD(+) + H(+). The protein operates within cofactor biosynthesis; NAD(+) biosynthesis; NAD(+) from deamido-NAD(+) (ammonia route): step 1/1. Catalyzes the ATP-dependent amidation of deamido-NAD to form NAD. Uses ammonia as a nitrogen source. This Burkholderia cenocepacia (strain ATCC BAA-245 / DSM 16553 / LMG 16656 / NCTC 13227 / J2315 / CF5610) (Burkholderia cepacia (strain J2315)) protein is NH(3)-dependent NAD(+) synthetase.